The sequence spans 147 residues: Hemoglobin subunit gamma (147 aa).

Positions 3 to 147 constitute a Globin domain; that stretch reads HFTAEEKAVI…VAIALAHKYH (145 aa). His-64 and His-93 together coordinate heme b.

Belongs to the globin family. In terms of assembly, heterotetramer of two alpha chains and two gamma chains in fetal hemoglobin (Hb F). In terms of tissue distribution, red blood cells.

In terms of biological role, gamma chains make up the fetal hemoglobin F, in combination with alpha chains. This Eulemur fulvus fulvus (Brown lemur) protein is Hemoglobin subunit gamma (HBG).